Reading from the N-terminus, the 31-residue chain is Glucagon-3 (31 aa).

The protein belongs to the glucagon family.

Its subcellular location is the secreted. Functionally, glucagon plays a key role in glucose metabolism and homeostasis. Regulates blood glucose by increasing gluconeogenesis and decreasing glycolysis. The chain is Glucagon-3 from Huso dauricus (Kaluga sturgeon).